The chain runs to 352 residues: Holliday junction branch migration complex subunit RuvB (352 aa).

Residues 1-181 (MTDRIVGAAK…FGIPVRLHFY (181 aa)) form a large ATPase domain (RuvB-L) region. ATP is bound by residues leucine 20, arginine 21, glycine 62, lysine 65, threonine 66, threonine 67, 128–130 (EDF), arginine 171, tyrosine 181, and arginine 218. Position 66 (threonine 66) interacts with Mg(2+). The small ATPAse domain (RuvB-S) stretch occupies residues 182–252 (EVAELEGIVR…AADKALQRLE (71 aa)). Residues 255-352 (ELGLDALDHR…FDGDEENGSA (98 aa)) form a head domain (RuvB-H) region. Residues arginine 291, arginine 310, and arginine 315 each coordinate DNA.

Belongs to the RuvB family. As to quaternary structure, homohexamer. Forms an RuvA(8)-RuvB(12)-Holliday junction (HJ) complex. HJ DNA is sandwiched between 2 RuvA tetramers; dsDNA enters through RuvA and exits via RuvB. An RuvB hexamer assembles on each DNA strand where it exits the tetramer. Each RuvB hexamer is contacted by two RuvA subunits (via domain III) on 2 adjacent RuvB subunits; this complex drives branch migration. In the full resolvosome a probable DNA-RuvA(4)-RuvB(12)-RuvC(2) complex forms which resolves the HJ.

The protein resides in the cytoplasm. It catalyses the reaction ATP + H2O = ADP + phosphate + H(+). Functionally, the RuvA-RuvB-RuvC complex processes Holliday junction (HJ) DNA during genetic recombination and DNA repair, while the RuvA-RuvB complex plays an important role in the rescue of blocked DNA replication forks via replication fork reversal (RFR). RuvA specifically binds to HJ cruciform DNA, conferring on it an open structure. The RuvB hexamer acts as an ATP-dependent pump, pulling dsDNA into and through the RuvAB complex. RuvB forms 2 homohexamers on either side of HJ DNA bound by 1 or 2 RuvA tetramers; 4 subunits per hexamer contact DNA at a time. Coordinated motions by a converter formed by DNA-disengaged RuvB subunits stimulates ATP hydrolysis and nucleotide exchange. Immobilization of the converter enables RuvB to convert the ATP-contained energy into a lever motion, pulling 2 nucleotides of DNA out of the RuvA tetramer per ATP hydrolyzed, thus driving DNA branch migration. The RuvB motors rotate together with the DNA substrate, which together with the progressing nucleotide cycle form the mechanistic basis for DNA recombination by continuous HJ branch migration. Branch migration allows RuvC to scan DNA until it finds its consensus sequence, where it cleaves and resolves cruciform DNA. This chain is Holliday junction branch migration complex subunit RuvB, found in Parvibaculum lavamentivorans (strain DS-1 / DSM 13023 / NCIMB 13966).